Reading from the N-terminus, the 578-residue chain is 65-kDa microtubule-associated protein 2 (578 aa).

Coiled coils occupy residues 64–84, 151–184, 235–257, 290–312, and 461–489; these read AELLQTLSDATVELSNLTTAL, DETDLSLKRLDDFQRKLQELQKEKSDRLQKVLEF, TLKEDKMQRLKKLQELATQLTDL, ALALDLIEQAEVEVDRLDQLKSS, and AMLDEYTMLRQEREDEKRRLKEQKKQQEQ. Over residues 473 to 494 the composition is skewed to basic and acidic residues; that stretch reads REDEKRRLKEQKKQQEQPHTDQ. The disordered stretch occupies residues 473–578; that stretch reads REDEKRRLKE…SRADPVMASP (106 aa). Phosphoserine is present on residues Ser503 and Ser532. Positions 549–558 are enriched in polar residues; sequence KIASPSNIVA. Ser566, Ser569, and Ser577 each carry phosphoserine.

It belongs to the MAP65/ASE1 family. In terms of assembly, forms a dimer. Binds to microtubules (MT). Bundles polymerized MT via the formation of 25-nm crossbridges with centrally located endocytic MT.

The protein localises to the nucleus. The protein resides in the cytoplasm. It localises to the cytoskeleton. Its subcellular location is the spindle pole. It is found in the phragmoplast. Functionally, microtubule-associated protein that stabilize microtubules (MT). Involved in the regulation of MT organization and dynamics. Confers MT resistance to the drug propyzamide and cold conditions. The chain is 65-kDa microtubule-associated protein 2 (MAP65-2) from Arabidopsis thaliana (Mouse-ear cress).